Here is a 120-residue protein sequence, read N- to C-terminus: UPF0231 protein YacL (120 aa).

It belongs to the UPF0231 family.

In Escherichia coli O6:K15:H31 (strain 536 / UPEC), this protein is UPF0231 protein YacL.